The chain runs to 130 residues: Protein lgg-2 (130 aa).

Gly130 is lipidated: Phosphatidylethanolamine amidated glycine.

Belongs to the ATG8 family. May interact with vps-39. Interacts with lgg-3; the interaction is direct. Interacts with atg-16.1 (via WD domain) and atg-16.2 (via WD 5-6 repeats); the interactions are direct. Interacts with sepa-1 (via the LIR motifs); the interaction is direct. Interacts with sqst-1 (via the LIR motifs); the interaction is direct. Interacts with epg-2 (via the LIR motifs); the interaction is weak. Interacts with atg-7; the interaction is direct. Interacts with atg-3. The interaction with atg-7 and atg-3 may be required for the lipidation of lgg-2. Post-translationally, this protein is subject to lipidation. Lipidation is regulated by lgg-1.

The protein localises to the cytoplasmic vesicle. It is found in the autophagosome. It localises to the cytoplasm. Its subcellular location is the cell membrane. Ubiquitin-like modifier involved in the formation of autophagosomal vacuoles (autophagosomes). When lipidated mediates tethering between adjacent membranes and stimulates membrane fusion. Less effective at promoting membrane fusion than lgg-1. Acts upstream of the autophagy protein epg-5 in the aggrephagy pathway, which is the macroautophagic degradation of ubiquitinated protein aggregates, and preferentially interacts with autophagy proteins and substrates containing LIR motifs to mediate autophagosome formation and protein aggregate degradation. In particular binds to components of an atg-5-lgg-3-atg-16 complex to regulate autophagosome formation and cargo sequestration. Required for the degradation of specific sqst-1-containing aggregates during embryogenesis and the early stages of larval development. Involved in allophagy, which is an autophagic process in which paternal mitochondria and organelles are degraded during fertilization, and moreover is required for the degradation of lgg-1-positive allophagic autophagosomes in embryos. Involved in xenophagy, the autophagy-mediated degradation of pathogens and pathogen products, such as toxins. Also plays a role in membrane-pore repair. Through HOPS complex subunit vps-39, tethers lysosomes with autophagosomes to form autolysosomes. Plays a role in the distribution and clearance of germ cell specific P-granules from somatic cells to ensure exclusive localization of the P-granules in germ cells. Essential for dauer development and life-span extension. This chain is Protein lgg-2, found in Caenorhabditis elegans.